Here is a 347-residue protein sequence, read N- to C-terminus: Haptoglobin (347 aa).

Positions methionine 1–alanine 18 are cleaved as a signal peptide. In terms of domain architecture, Sushi spans aspartate 31–alanine 88. Disulfide bonds link cysteine 52–cysteine 86, cysteine 90–cysteine 207, cysteine 250–cysteine 281, and cysteine 292–cysteine 322. The Peptidase S1 domain occupies isoleucine 103 to alanine 345. N-linked (GlcNAc...) asparagine glycans are attached at residues asparagine 148, asparagine 182, and asparagine 264. An interaction with CD163 region spans residues valine 259 to asparagine 264.

Belongs to the peptidase S1 family. As to quaternary structure, tetramer of two alpha and two beta chains; disulfide-linked. The hemoglobin/haptoglobin complex is composed of a haptoglobin dimer bound to two hemoglobin alpha-beta dimers. Interacts with CD163. Interacts with ERGIC3. In terms of tissue distribution, expressed by the liver and secreted in plasma.

It is found in the secreted. Its function is as follows. As a result of hemolysis, hemoglobin is found to accumulate in the kidney and is secreted in the urine. Haptoglobin captures, and combines with free plasma hemoglobin to allow hepatic recycling of heme iron and to prevent kidney damage. Haptoglobin also acts as an antioxidant, has antibacterial activity and plays a role in modulating many aspects of the acute phase response. Hemoglobin/haptoglobin complexes are rapidly cleared by the macrophage CD163 scavenger receptor expressed on the surface of liver Kupfer cells through an endocytic lysosomal degradation pathway. The sequence is that of Haptoglobin (Hp) from Mus caroli (Ryukyu mouse).